The sequence spans 198 residues: Synaptobrevin homolog YKT6-B (198 aa).

A Longin domain is found at 8 to 127 (VLYKGENKVH…IQYNALDSYL (120 aa)). In terms of domain architecture, v-SNARE coiled-coil homology spans 138–198 (PMSKVQAELD…RKQNSCCDIM (61 aa)). Residue C194 is the site of S-palmitoyl cysteine attachment. A Cysteine methyl ester modification is found at C195. C195 is lipidated: S-farnesyl cysteine. The propeptide at 196-198 (DIM) is removed in mature form.

The protein belongs to the synaptobrevin family. Post-translationally, palmitoylated; catalyzes its own palmitoylation. Palmitoylation is required for Golgi targeting. In terms of processing, farnesylation is required for Golgi targeting.

Its subcellular location is the cytoplasm. The protein resides in the cytosol. It is found in the cytoplasmic vesicle membrane. It localises to the golgi apparatus membrane. Functionally, vesicular soluble NSF attachment protein receptor (v-SNARE) mediating vesicle docking and fusion to a specific acceptor cellular compartment. Functions in endoplasmic reticulum to Golgi transport; as part of a SNARE complex composed of GOSR1, GOSR2 and STX5. Functions in early/recycling endosome to TGN transport; as part of a SNARE complex composed of BET1L, GOSR1 and STX5. Has a S-palmitoyl transferase activity. The chain is Synaptobrevin homolog YKT6-B (ykt6-b) from Xenopus laevis (African clawed frog).